We begin with the raw amino-acid sequence, 174 residues long: Crossover junction endodeoxyribonuclease RuvC (174 aa).

Active-site residues include aspartate 8, glutamate 67, and aspartate 139. 3 residues coordinate Mg(2+): aspartate 8, glutamate 67, and aspartate 139.

Belongs to the RuvC family. Homodimer which binds Holliday junction (HJ) DNA. The HJ becomes 2-fold symmetrical on binding to RuvC with unstacked arms; it has a different conformation from HJ DNA in complex with RuvA. In the full resolvosome a probable DNA-RuvA(4)-RuvB(12)-RuvC(2) complex forms which resolves the HJ. Requires Mg(2+) as cofactor.

It is found in the cytoplasm. It carries out the reaction Endonucleolytic cleavage at a junction such as a reciprocal single-stranded crossover between two homologous DNA duplexes (Holliday junction).. In terms of biological role, the RuvA-RuvB-RuvC complex processes Holliday junction (HJ) DNA during genetic recombination and DNA repair. Endonuclease that resolves HJ intermediates. Cleaves cruciform DNA by making single-stranded nicks across the HJ at symmetrical positions within the homologous arms, yielding a 5'-phosphate and a 3'-hydroxyl group; requires a central core of homology in the junction. The consensus cleavage sequence is 5'-(A/T)TT(C/G)-3'. Cleavage occurs on the 3'-side of the TT dinucleotide at the point of strand exchange. HJ branch migration catalyzed by RuvA-RuvB allows RuvC to scan DNA until it finds its consensus sequence, where it cleaves and resolves the cruciform DNA. The protein is Crossover junction endodeoxyribonuclease RuvC of Pseudomonas putida (strain W619).